The following is a 199-amino-acid chain: uncharacterized protein (199 aa).

3 helical membrane-spanning segments follow: residues 27–47, 55–75, and 172–192; these read LIKI…PILA, LLTL…VAAL, and LLLL…VLLL.

It localises to the cell membrane. This is an uncharacterized protein from Synechocystis sp. (strain ATCC 27184 / PCC 6803 / Kazusa).